We begin with the raw amino-acid sequence, 376 residues long: Succinyl-diaminopimelate desuccinylase (376 aa).

Residue His-68 participates in Zn(2+) binding. Asp-70 is an active-site residue. Asp-101 contacts Zn(2+). Glu-135 (proton acceptor) is an active-site residue. Zn(2+)-binding residues include Glu-136, Glu-164, and His-349.

Belongs to the peptidase M20A family. DapE subfamily. In terms of assembly, homodimer. Zn(2+) serves as cofactor. Requires Co(2+) as cofactor.

The catalysed reaction is N-succinyl-(2S,6S)-2,6-diaminopimelate + H2O = (2S,6S)-2,6-diaminopimelate + succinate. It participates in amino-acid biosynthesis; L-lysine biosynthesis via DAP pathway; LL-2,6-diaminopimelate from (S)-tetrahydrodipicolinate (succinylase route): step 3/3. Functionally, catalyzes the hydrolysis of N-succinyl-L,L-diaminopimelic acid (SDAP), forming succinate and LL-2,6-diaminopimelate (DAP), an intermediate involved in the bacterial biosynthesis of lysine and meso-diaminopimelic acid, an essential component of bacterial cell walls. The chain is Succinyl-diaminopimelate desuccinylase from Marinobacter nauticus (strain ATCC 700491 / DSM 11845 / VT8) (Marinobacter aquaeolei).